Reading from the N-terminus, the 325-residue chain is Probable tRNA-dihydrouridine synthase 2 (325 aa).

18–20 (PME) is a binding site for FMN. The active-site Proton donor is Cys-105. Residues Lys-143, 208–210 (NGD), and 232–233 (GR) each bind FMN.

The protein belongs to the Dus family. FMN is required as a cofactor.

The enzyme catalyses a 5,6-dihydrouridine in tRNA + NAD(+) = a uridine in tRNA + NADH + H(+). It catalyses the reaction a 5,6-dihydrouridine in tRNA + NADP(+) = a uridine in tRNA + NADPH + H(+). In terms of biological role, catalyzes the synthesis of 5,6-dihydrouridine (D), a modified base found in the D-loop of most tRNAs, via the reduction of the C5-C6 double bond in target uridines. The polypeptide is Probable tRNA-dihydrouridine synthase 2 (dus2) (Bacillus subtilis (strain 168)).